A 161-amino-acid chain; its full sequence is Cyclic pyranopterin monophosphate synthase (161 aa).

Substrate-binding positions include 73 to 75 (LCH) and 110 to 111 (ME). Residue Asp125 is part of the active site.

It belongs to the MoaC family. Homohexamer; trimer of dimers.

It carries out the reaction (8S)-3',8-cyclo-7,8-dihydroguanosine 5'-triphosphate = cyclic pyranopterin phosphate + diphosphate. Its pathway is cofactor biosynthesis; molybdopterin biosynthesis. In terms of biological role, catalyzes the conversion of (8S)-3',8-cyclo-7,8-dihydroguanosine 5'-triphosphate to cyclic pyranopterin monophosphate (cPMP). In Pseudomonas syringae pv. tomato (strain ATCC BAA-871 / DC3000), this protein is Cyclic pyranopterin monophosphate synthase.